We begin with the raw amino-acid sequence, 336 residues long: Biotin synthase (336 aa).

One can recognise a Radical SAM core domain in the interval 51–270; sequence NQVQCNQLLN…IALARIMMPK (220 aa). [4Fe-4S] cluster-binding residues include Cys-66, Cys-70, and Cys-73. Cys-110, Cys-141, Cys-201, and Arg-274 together coordinate [2Fe-2S] cluster.

It belongs to the radical SAM superfamily. Biotin synthase family. As to quaternary structure, homodimer. It depends on [4Fe-4S] cluster as a cofactor. The cofactor is [2Fe-2S] cluster.

The catalysed reaction is (4R,5S)-dethiobiotin + (sulfur carrier)-SH + 2 reduced [2Fe-2S]-[ferredoxin] + 2 S-adenosyl-L-methionine = (sulfur carrier)-H + biotin + 2 5'-deoxyadenosine + 2 L-methionine + 2 oxidized [2Fe-2S]-[ferredoxin]. It functions in the pathway cofactor biosynthesis; biotin biosynthesis; biotin from 7,8-diaminononanoate: step 2/2. In terms of biological role, catalyzes the conversion of dethiobiotin (DTB) to biotin by the insertion of a sulfur atom into dethiobiotin via a radical-based mechanism. The polypeptide is Biotin synthase (Rhodopseudomonas palustris (strain ATCC BAA-98 / CGA009)).